The chain runs to 1211 residues: DNA-directed RNA polymerase subunit beta' (1211 aa).

Cys60, Cys62, Cys75, and Cys78 together coordinate Zn(2+). Mg(2+)-binding residues include Asp450, Asp452, and Asp454. Zn(2+)-binding residues include Cys819, Cys893, Cys900, and Cys903.

Belongs to the RNA polymerase beta' chain family. The RNAP catalytic core consists of 2 alpha, 1 beta, 1 beta' and 1 omega subunit. When a sigma factor is associated with the core the holoenzyme is formed, which can initiate transcription. Requires Mg(2+) as cofactor. It depends on Zn(2+) as a cofactor.

The enzyme catalyses RNA(n) + a ribonucleoside 5'-triphosphate = RNA(n+1) + diphosphate. Functionally, DNA-dependent RNA polymerase catalyzes the transcription of DNA into RNA using the four ribonucleoside triphosphates as substrates. The chain is DNA-directed RNA polymerase subunit beta' from Streptococcus equi subsp. equi (strain 4047).